The following is an 848-amino-acid chain: Trimethylamine-N-oxide reductase 1 (848 aa).

The tat-type signal signal peptide spans 1-39; it reads MNNNDLFQASRRRFLAQLGGLTVAGMLGTSLLTPRRATA. Ser-191 is a binding site for Mo-bis(molybdopterin guanine dinucleotide).

This sequence belongs to the prokaryotic molybdopterin-containing oxidoreductase family. Mo-bis(molybdopterin guanine dinucleotide) serves as cofactor. In terms of processing, predicted to be exported by the Tat system. The position of the signal peptide cleavage has not been experimentally proven.

It localises to the periplasm. It catalyses the reaction trimethylamine + 2 Fe(III)-[cytochrome c] + H2O = trimethylamine N-oxide + 2 Fe(II)-[cytochrome c] + 3 H(+). Reduces trimethylamine-N-oxide (TMAO) into trimethylamine; an anaerobic reaction coupled to energy-yielding reactions. The protein is Trimethylamine-N-oxide reductase 1 (torA) of Escherichia coli O6:H1 (strain CFT073 / ATCC 700928 / UPEC).